Reading from the N-terminus, the 665-residue chain is Target of rapamycin complex 2 subunit sin1 (665 aa).

S62 is modified (phosphoserine). Polar residues-rich tracts occupy residues 65–83 and 100–109; these read IVAN…TKQV and YATSDLSESS. Positions 65–112 are disordered; it reads IVANDTVSNVRKPSDTKQVNGAGGQVNHSRAEDSDYATSDLSESSDVG. A Phosphoserine modification is found at S133. Positions 255–392 constitute a CRIM domain; that stretch reads TSALRALLEH…ATPAQIKENQ (138 aa). Residues 395–433 are disordered; it reads YPFKSKHPTSIPEANNKTHIRHTSSTSSQSQKQAQDVKD. Phosphoserine is present on residues S404, S490, S502, and S530. The segment at 517-537 is disordered; that stretch reads RDKKGSTQQLPTSSPQNSVYG. Residues 522 to 536 show a composition bias toward polar residues; sequence STQQLPTSSPQNSVY. Positions 558–659 constitute an SIN1-type PH domain; sequence TYQEFLVWKR…IVSRIRALMN (102 aa).

The protein belongs to the SIN1 family. As to quaternary structure, the target of rapamycin complex 2 (TORC2) is composed of at least bit61, pop3/wat1, sin1, ste20 and tor1. Interacts with the sty1 MAP kinase. In terms of processing, phosphorylated; under environmental stress. Either Ser-61 or Ser-62 and Ser-298, Ser-299 or Ser-301 are phosphorylated as well.

Its function is as follows. Component of the mechanistic target of rapamycin complex 2 (mTORC2), which regulates multiple cellular processes to control cell growth in response to environmental signals. In response to signals, TORC2 phosphorylates AGC protein kinase family members, such as gad8. TORC2 is required for cell survival under various stress conditions. TORC2 positively controls G1 cell-cycle arrest, sexual development and amino acid uptake. Positively regulates amino acid uptake through the control of expression of amino acid permeases. Within the mTORC2 complex, sin1 acts as a substrate adapter which recognizes and binds AGC protein kinase family members for phosphorylation by tor1. The chain is Target of rapamycin complex 2 subunit sin1 from Schizosaccharomyces pombe (strain 972 / ATCC 24843) (Fission yeast).